The primary structure comprises 545 residues: Threonine--tRNA ligase catalytic subunit (545 aa).

The segment at 139 to 433 (DHRLIGEKLD…LLEHFKGKLP (295 aa)) is catalytic. 3 residues coordinate Zn(2+): C231, H282, and H410.

Belongs to the class-II aminoacyl-tRNA synthetase family. Homodimer. Probably interacts with its editing subunit. It depends on Zn(2+) as a cofactor.

Its subcellular location is the cytoplasm. The catalysed reaction is tRNA(Thr) + L-threonine + ATP = L-threonyl-tRNA(Thr) + AMP + diphosphate + H(+). Functionally, catalyzes the attachment of threonine to tRNA(Thr) in a two-step reaction: L-threonine is first activated by ATP to form Thr-AMP and then transferred to the acceptor end of tRNA(Thr). Also activates L-serine and transfers it to tRNA(Thr) but cannot deacylate incorrectly charged amino acid; unlike most archaea the editing function is found in a freestanding protein. The chain is Threonine--tRNA ligase catalytic subunit from Saccharolobus islandicus (strain M.16.27) (Sulfolobus islandicus).